A 154-amino-acid chain; its full sequence is 3-dehydroquinate dehydratase (154 aa).

Tyr26 acts as the Proton acceptor in catalysis. Positions 77, 83, and 90 each coordinate substrate. The active-site Proton donor is His103. Substrate is bound by residues 104-105 and Arg114; that span reads IS.

Belongs to the type-II 3-dehydroquinase family. In terms of assembly, homododecamer.

The enzyme catalyses 3-dehydroquinate = 3-dehydroshikimate + H2O. The protein operates within metabolic intermediate biosynthesis; chorismate biosynthesis; chorismate from D-erythrose 4-phosphate and phosphoenolpyruvate: step 3/7. Functionally, catalyzes a trans-dehydration via an enolate intermediate. This Buchnera aphidicola subsp. Baizongia pistaciae (strain Bp) protein is 3-dehydroquinate dehydratase.